The sequence spans 463 residues: Glycine--tRNA ligase (463 aa).

2 residues coordinate substrate: R102 and E165. ATP-binding positions include R197–E199, F207–F212, E284–L285, and G328–R331. F212–E216 is a binding site for substrate. Position 324 to 328 (E324 to G328) interacts with substrate.

Belongs to the class-II aminoacyl-tRNA synthetase family. Homodimer.

The protein localises to the cytoplasm. The catalysed reaction is tRNA(Gly) + glycine + ATP = glycyl-tRNA(Gly) + AMP + diphosphate. Functionally, catalyzes the attachment of glycine to tRNA(Gly). The chain is Glycine--tRNA ligase from Mycobacterium bovis (strain ATCC BAA-935 / AF2122/97).